The following is a 340-amino-acid chain: tRNA-specific 2-thiouridylase MnmA (340 aa).

ATP is bound by residues 6-13 and M32; that span reads AMSGGVDS. The active-site Nucleophile is C92. C92 and C186 are joined by a disulfide. G116 contacts ATP. Residues 134-136 form an interaction with tRNA region; sequence KDQ. The Cysteine persulfide intermediate role is filled by C186. The segment at 288–289 is interaction with tRNA; the sequence is RY.

Belongs to the MnmA/TRMU family.

It localises to the cytoplasm. It carries out the reaction S-sulfanyl-L-cysteinyl-[protein] + uridine(34) in tRNA + AH2 + ATP = 2-thiouridine(34) in tRNA + L-cysteinyl-[protein] + A + AMP + diphosphate + H(+). Catalyzes the 2-thiolation of uridine at the wobble position (U34) of tRNA, leading to the formation of s(2)U34. In Campylobacter concisus (strain 13826), this protein is tRNA-specific 2-thiouridylase MnmA.